A 353-amino-acid chain; its full sequence is Phospho-N-acetylmuramoyl-pentapeptide-transferase (353 aa).

Helical transmembrane passes span Leu24–Ala44, Thr66–Ala86, Leu88–Phe108, Phe129–Asp149, Pro160–Ala180, Gly192–Ala212, Val229–Tyr249, Val256–Val276, Ile281–Val301, and Lys330–Leu350.

Belongs to the glycosyltransferase 4 family. MraY subfamily. Mg(2+) serves as cofactor.

It localises to the cell inner membrane. The enzyme catalyses UDP-N-acetyl-alpha-D-muramoyl-L-alanyl-gamma-D-glutamyl-meso-2,6-diaminopimeloyl-D-alanyl-D-alanine + di-trans,octa-cis-undecaprenyl phosphate = di-trans,octa-cis-undecaprenyl diphospho-N-acetyl-alpha-D-muramoyl-L-alanyl-D-glutamyl-meso-2,6-diaminopimeloyl-D-alanyl-D-alanine + UMP. It functions in the pathway cell wall biogenesis; peptidoglycan biosynthesis. Functionally, catalyzes the initial step of the lipid cycle reactions in the biosynthesis of the cell wall peptidoglycan: transfers peptidoglycan precursor phospho-MurNAc-pentapeptide from UDP-MurNAc-pentapeptide onto the lipid carrier undecaprenyl phosphate, yielding undecaprenyl-pyrophosphoryl-MurNAc-pentapeptide, known as lipid I. This is Phospho-N-acetylmuramoyl-pentapeptide-transferase from Helicobacter acinonychis (strain Sheeba).